The following is a 270-amino-acid chain: Molybdenum-pterin-binding protein MopB (270 aa).

2 consecutive Mop domains span residues 131 to 197 (RTSA…LLAG) and 203 to 269 (RLSV…ILAL).

The protein belongs to the ModE family.

This chain is Molybdenum-pterin-binding protein MopB (mopB), found in Rhodobacter capsulatus (Rhodopseudomonas capsulata).